A 432-amino-acid chain; its full sequence is Peptidase B (432 aa).

Lys196 and Asp201 together coordinate Mn(2+). Lys208 is a catalytic residue. Positions 219, 278, and 280 each coordinate Mn(2+). Arg282 is an active-site residue.

This sequence belongs to the peptidase M17 family. As to quaternary structure, homohexamer. The cofactor is Mn(2+).

The protein resides in the cytoplasm. The enzyme catalyses Release of an N-terminal amino acid, Xaa, from a peptide or arylamide. Xaa is preferably Glu or Asp but may be other amino acids, including Leu, Met, His, Cys and Gln.. Probably plays an important role in intracellular peptide degradation. In Yersinia pseudotuberculosis serotype O:1b (strain IP 31758), this protein is Peptidase B.